A 290-amino-acid chain; its full sequence is 4-hydroxybenzoate octaprenyltransferase (290 aa).

8 consecutive transmembrane segments (helical) span residues 23-43 (IGTLLLLWPTLWALWLAGKGV), 46-66 (LSILVVFVVGVFLMRAAGCVV), 99-119 (LFVVLVLVSFGLVLTLNAMTI), 141-161 (LPQFVLGAAFGWGIPMAYAAV), 170-190 (WLLLLANICWTVAYDTLYAMV), 213-233 (LIVGLLQFATLLLMLWVGYLT), 234-254 (QMSGAFYWSLLLAGALFIHQQ), and 268-288 (AFMDNNYVGLVLFIGIALSYW).

It belongs to the UbiA prenyltransferase family. Mg(2+) serves as cofactor.

Its subcellular location is the cell inner membrane. The enzyme catalyses all-trans-octaprenyl diphosphate + 4-hydroxybenzoate = 4-hydroxy-3-(all-trans-octaprenyl)benzoate + diphosphate. It participates in cofactor biosynthesis; ubiquinone biosynthesis. In terms of biological role, catalyzes the prenylation of para-hydroxybenzoate (PHB) with an all-trans polyprenyl group. Mediates the second step in the final reaction sequence of ubiquinone-8 (UQ-8) biosynthesis, which is the condensation of the polyisoprenoid side chain with PHB, generating the first membrane-bound Q intermediate 3-octaprenyl-4-hydroxybenzoate. In Serratia proteamaculans (strain 568), this protein is 4-hydroxybenzoate octaprenyltransferase.